The sequence spans 224 residues: DNA mismatch repair protein MutH (224 aa).

The protein belongs to the MutH family.

It localises to the cytoplasm. In terms of biological role, sequence-specific endonuclease that cleaves unmethylated GATC sequences. It is involved in DNA mismatch repair. The chain is DNA mismatch repair protein MutH from Histophilus somni (strain 129Pt) (Haemophilus somnus).